The chain runs to 178 residues: MADEGDVLTDLDMDPAAGGNGADNRPTAGFITQYIKDMSVENPNAPGVYQWQEQPQIDLQFNIGANAVNEEVTEVELKINVEAKTDQGALYIIELVYAGLVGIRNLGDDQAHMFVYAEAPRILFPFARRVIADATRDLGFQPLMLDPIDFNGLYMQRLQQKAAEEAQGEGGETPAGDA.

Residues 1–13 (MADEGDVLTDLDM) show a composition bias toward acidic residues. The disordered stretch occupies residues 1–25 (MADEGDVLTDLDMDPAAGGNGADNR).

It belongs to the SecB family. In terms of assembly, homotetramer, a dimer of dimers. One homotetramer interacts with 1 SecA dimer.

The protein resides in the cytoplasm. Functionally, one of the proteins required for the normal export of preproteins out of the cell cytoplasm. It is a molecular chaperone that binds to a subset of precursor proteins, maintaining them in a translocation-competent state. It also specifically binds to its receptor SecA. This chain is Protein-export protein SecB, found in Erythrobacter litoralis (strain HTCC2594).